A 145-amino-acid polypeptide reads, in one-letter code: MAKNILLLNGPNLNMLGSREPEVYGSATLADVERAATEQASQAGAKLTAFQSNHEGVLIDRIQAAKKEGVDAIIINPGGLTHSSVSLRDALASVALPFVEVHVSNIHQREAFRHHSYLSGIAVGVICGLGIDGYTAAISFALKKL.

The active-site Proton acceptor is the Y24. Substrate-binding residues include N76, H82, and D89. Residue H102 is the Proton donor of the active site. Residues 103-104 (VS) and R113 contribute to the substrate site.

Belongs to the type-II 3-dehydroquinase family. In terms of assembly, homododecamer.

It carries out the reaction 3-dehydroquinate = 3-dehydroshikimate + H2O. The protein operates within metabolic intermediate biosynthesis; chorismate biosynthesis; chorismate from D-erythrose 4-phosphate and phosphoenolpyruvate: step 3/7. Functionally, catalyzes a trans-dehydration via an enolate intermediate. The protein is 3-dehydroquinate dehydratase of Herminiimonas arsenicoxydans.